Here is a 313-residue protein sequence, read N- to C-terminus: Porphobilinogen deaminase (313 aa).

Cysteine 242 is modified (S-(dipyrrolylmethanemethyl)cysteine).

Belongs to the HMBS family. Monomer. It depends on dipyrromethane as a cofactor.

The enzyme catalyses 4 porphobilinogen + H2O = hydroxymethylbilane + 4 NH4(+). The protein operates within porphyrin-containing compound metabolism; protoporphyrin-IX biosynthesis; coproporphyrinogen-III from 5-aminolevulinate: step 2/4. In terms of biological role, tetrapolymerization of the monopyrrole PBG into the hydroxymethylbilane pre-uroporphyrinogen in several discrete steps. The chain is Porphobilinogen deaminase from Proteus mirabilis (strain HI4320).